A 100-amino-acid chain; its full sequence is Urease subunit gamma (100 aa).

It belongs to the urease gamma subunit family. In terms of assembly, heterotrimer of UreA (gamma), UreB (beta) and UreC (alpha) subunits. Three heterotrimers associate to form the active enzyme.

The protein localises to the cytoplasm. The catalysed reaction is urea + 2 H2O + H(+) = hydrogencarbonate + 2 NH4(+). Its pathway is nitrogen metabolism; urea degradation; CO(2) and NH(3) from urea (urease route): step 1/1. This is Urease subunit gamma from Roseobacter denitrificans (strain ATCC 33942 / OCh 114) (Erythrobacter sp. (strain OCh 114)).